We begin with the raw amino-acid sequence, 323 residues long: 4-hydroxythreonine-4-phosphate dehydrogenase (323 aa).

Position 133 (T133) interacts with substrate. A divalent metal cation is bound by residues H161, H206, and H261. Substrate-binding residues include K269, N278, and R287.

The protein belongs to the PdxA family. As to quaternary structure, homodimer. It depends on Zn(2+) as a cofactor. The cofactor is Mg(2+). Requires Co(2+) as cofactor.

The protein localises to the cytoplasm. It carries out the reaction 4-(phosphooxy)-L-threonine + NAD(+) = 3-amino-2-oxopropyl phosphate + CO2 + NADH. It functions in the pathway cofactor biosynthesis; pyridoxine 5'-phosphate biosynthesis; pyridoxine 5'-phosphate from D-erythrose 4-phosphate: step 4/5. Functionally, catalyzes the NAD(P)-dependent oxidation of 4-(phosphooxy)-L-threonine (HTP) into 2-amino-3-oxo-4-(phosphooxy)butyric acid which spontaneously decarboxylates to form 3-amino-2-oxopropyl phosphate (AHAP). The sequence is that of 4-hydroxythreonine-4-phosphate dehydrogenase from Xanthomonas axonopodis pv. citri (strain 306).